A 353-amino-acid chain; its full sequence is Trans-enoyl reductase eqxC (353 aa).

An NADP(+)-binding site is contributed by 45-48 (VDTK). 131–138 (ISFMTTGL) provides a ligand contact to substrate. NADP(+)-binding positions include 166 to 169 (SSAT), 189 to 192 (SPRN), Y207, and 254 to 255 (LE). Residue 275-279 (GPQML) participates in substrate binding. 344–345 (IS) serves as a coordination point for NADP(+).

This sequence belongs to the zinc-containing alcohol dehydrogenase family. As to quaternary structure, monomer.

The enzyme catalyses L-serine + 7 malonyl-CoA + acetyl-CoA + 2 S-adenosyl-L-methionine + ATP + 8 NADPH + 11 H(+) = (5S)-3-[(2E,6R,8E,10E,12E)-2,6-dimethyltetradeca-2,8,10,12-tetraenoyl]-5-(hydroxymethyl)pyrrolidine-2,4-dione + AMP + 2 S-adenosyl-L-homocysteine + 7 CO2 + diphosphate + 8 NADP(+) + 8 CoA + 6 H2O. It participates in mycotoxin biosynthesis. Functionally, trans-enoyl reductase; part of the gene cluster that mediates the biosynthesis of equisetin, a trans-fused decalin-containing tetramic acid with antimicrobial activity. The PKS module of eqxS together with the enoylreductase eqxC catalyze the formation of the polyketide unit which is then conjugated to L-serine by the condensation domain of the eqxS NRPS module. Activity of the Dieckmann cyclase domain (RED) results in release of the Dieckmann product intermediate. Diels-Alderase eqx3 is involved in endo-selective Diels-Alder cycloaddition to form the decalin ring, leading to the production of N-desmethylequisetin also called trichosetin. Subsequent N-methylation is carried out by eqxD to give equisetin. This chain is Trans-enoyl reductase eqxC, found in Fusarium heterosporum.